We begin with the raw amino-acid sequence, 371 residues long: Chorismate synthase (371 aa).

NADP(+) contacts are provided by Arg48 and Arg54. FMN-binding positions include 125–127, 238–239, Gly278, 293–297, and Arg319; these read RSS, NA, and KPTSS.

Belongs to the chorismate synthase family. In terms of assembly, homotetramer. It depends on FMNH2 as a cofactor.

It carries out the reaction 5-O-(1-carboxyvinyl)-3-phosphoshikimate = chorismate + phosphate. Its pathway is metabolic intermediate biosynthesis; chorismate biosynthesis; chorismate from D-erythrose 4-phosphate and phosphoenolpyruvate: step 7/7. In terms of biological role, catalyzes the anti-1,4-elimination of the C-3 phosphate and the C-6 proR hydrogen from 5-enolpyruvylshikimate-3-phosphate (EPSP) to yield chorismate, which is the branch point compound that serves as the starting substrate for the three terminal pathways of aromatic amino acid biosynthesis. This reaction introduces a second double bond into the aromatic ring system. The sequence is that of Chorismate synthase from Saccharophagus degradans (strain 2-40 / ATCC 43961 / DSM 17024).